Here is a 20-residue protein sequence, read N- to C-terminus: Cytochrome P450IIB (20 aa).

This sequence belongs to the cytochrome P450 family. It depends on heme as a cofactor.

Its subcellular location is the endoplasmic reticulum membrane. It localises to the microsome membrane. The catalysed reaction is an organic molecule + reduced [NADPH--hemoprotein reductase] + O2 = an alcohol + oxidized [NADPH--hemoprotein reductase] + H2O + H(+). Functionally, cytochromes P450 are a group of heme-thiolate monooxygenases. In liver microsomes, this enzyme is involved in an NADPH-dependent electron transport pathway. This isozyme is active upon P.nitroanisole, aniline, D-benzphetamine, delta(9)-tetrahydrocannabinol (THC) and strychnine. The chain is Cytochrome P450IIB from Cavia porcellus (Guinea pig).